A 950-amino-acid polypeptide reads, in one-letter code: 2-oxoglutarate dehydrogenase E1 component (950 aa).

The protein belongs to the alpha-ketoglutarate dehydrogenase family. As to quaternary structure, homodimer. Part of the 2-oxoglutarate dehydrogenase (OGDH) complex composed of E1 (2-oxoglutarate dehydrogenase), E2 (dihydrolipoamide succinyltransferase) and E3 (dihydrolipoamide dehydrogenase); the complex contains multiple copies of the three enzymatic components (E1, E2 and E3). Requires thiamine diphosphate as cofactor.

It carries out the reaction N(6)-[(R)-lipoyl]-L-lysyl-[protein] + 2-oxoglutarate + H(+) = N(6)-[(R)-S(8)-succinyldihydrolipoyl]-L-lysyl-[protein] + CO2. Its function is as follows. E1 component of the 2-oxoglutarate dehydrogenase (OGDH) complex which catalyzes the decarboxylation of 2-oxoglutarate, the first step in the conversion of 2-oxoglutarate to succinyl-CoA and CO(2). The chain is 2-oxoglutarate dehydrogenase E1 component (odhA) from Cupriavidus necator (strain ATCC 17699 / DSM 428 / KCTC 22496 / NCIMB 10442 / H16 / Stanier 337) (Ralstonia eutropha).